The sequence spans 719 residues: DNA ligase (719 aa).

Residues 42–46 (DAAYD), 92–93 (SL), and Glu-126 each bind NAD(+). Residue Lys-128 is the N6-AMP-lysine intermediate of the active site. Positions 149, 185, 301, and 325 each coordinate NAD(+). Zn(2+) is bound by residues Cys-430, Cys-433, Cys-448, and Cys-454. The BRCT domain maps to 640 to 719 (ATGSPVEGKT…DDWFKLVGED (80 aa)).

The protein belongs to the NAD-dependent DNA ligase family. LigA subfamily. It depends on Mg(2+) as a cofactor. Requires Mn(2+) as cofactor.

The catalysed reaction is NAD(+) + (deoxyribonucleotide)n-3'-hydroxyl + 5'-phospho-(deoxyribonucleotide)m = (deoxyribonucleotide)n+m + AMP + beta-nicotinamide D-nucleotide.. Its function is as follows. DNA ligase that catalyzes the formation of phosphodiester linkages between 5'-phosphoryl and 3'-hydroxyl groups in double-stranded DNA using NAD as a coenzyme and as the energy source for the reaction. It is essential for DNA replication and repair of damaged DNA. This Brucella melitensis biotype 2 (strain ATCC 23457) protein is DNA ligase.